We begin with the raw amino-acid sequence, 676 residues long: Mediator of RNA polymerase II transcription subunit 17 (676 aa).

Disordered stretches follow at residues 27–68 (IGSK…QFSN) and 117–176 (IEND…TQDT). The span at 29 to 40 (SKSTSPHSNSTS) shows a compositional bias: low complexity. Basic and acidic residues-rich tracts occupy residues 47–56 (HNTENEEVDN) and 120–134 (DNGK…KAED). Residues 135-145 (GIDTMDIDQND) show a composition bias toward acidic residues. A compositionally biased stretch (polar residues) spans 146-160 (NSEANTNDIGYNEWS).

Belongs to the Mediator complex subunit 17 family. In terms of assembly, component of the Mediator complex.

The protein resides in the nucleus. Component of the Mediator complex, a coactivator involved in the regulated transcription of nearly all RNA polymerase II-dependent genes. Mediator functions as a bridge to convey information from gene-specific regulatory proteins to the basal RNA polymerase II transcription machinery. Mediator is recruited to promoters by direct interactions with regulatory proteins and serves as a scaffold for the assembly of a functional preinitiation complex with RNA polymerase II and the general transcription factors. The chain is Mediator of RNA polymerase II transcription subunit 17 (SRB4) from Candida glabrata (strain ATCC 2001 / BCRC 20586 / JCM 3761 / NBRC 0622 / NRRL Y-65 / CBS 138) (Yeast).